Reading from the N-terminus, the 397-residue chain is DNA replication and repair protein RecF (397 aa).

30 to 37 (GPNGQGKT) is an ATP binding site.

The protein belongs to the RecF family.

It is found in the cytoplasm. Functionally, the RecF protein is involved in DNA metabolism; it is required for DNA replication and normal SOS inducibility. RecF binds preferentially to single-stranded, linear DNA. It also seems to bind ATP. The chain is DNA replication and repair protein RecF from Beutenbergia cavernae (strain ATCC BAA-8 / DSM 12333 / CCUG 43141 / JCM 11478 / NBRC 16432 / NCIMB 13614 / HKI 0122).